A 535-amino-acid chain; its full sequence is Ribonuclease Y (535 aa).

Residues 4-24 traverse the membrane as a helical segment; that stretch reads IILAMVCALIGLIIGYVAISM. Positions 107–145 are disordered; that stretch reads TDRASSLDRKDENLSNKEKMLDSKEQSLTDKSRHINERE. Positions 225–285 constitute a KH domain; that stretch reads TITTVHLPDD…IRREIARMTL (61 aa). The HD domain occupies 351–444; the sequence is VLRHSVEVGK…VAAADALSSA (94 aa).

Belongs to the RNase Y family.

It localises to the cell membrane. Functionally, endoribonuclease that initiates mRNA decay. The sequence is that of Ribonuclease Y from Streptococcus agalactiae serotype Ia (strain ATCC 27591 / A909 / CDC SS700).